The primary structure comprises 237 residues: 2-C-methyl-D-erythritol 4-phosphate cytidylyltransferase (237 aa).

This sequence belongs to the IspD/TarI cytidylyltransferase family. IspD subfamily.

It carries out the reaction 2-C-methyl-D-erythritol 4-phosphate + CTP + H(+) = 4-CDP-2-C-methyl-D-erythritol + diphosphate. Its pathway is isoprenoid biosynthesis; isopentenyl diphosphate biosynthesis via DXP pathway; isopentenyl diphosphate from 1-deoxy-D-xylulose 5-phosphate: step 2/6. Catalyzes the formation of 4-diphosphocytidyl-2-C-methyl-D-erythritol from CTP and 2-C-methyl-D-erythritol 4-phosphate (MEP). This is 2-C-methyl-D-erythritol 4-phosphate cytidylyltransferase from Acidithiobacillus ferrooxidans (strain ATCC 23270 / DSM 14882 / CIP 104768 / NCIMB 8455) (Ferrobacillus ferrooxidans (strain ATCC 23270)).